A 469-amino-acid polypeptide reads, in one-letter code: Desmin (469 aa).

The segment at 2 to 107 is head; the sequence is SQAYSSSQRV…QEFLTTRTNE (106 aa). Phosphoserine; by CDK1 is present on Ser-7. Position 12 is a phosphoserine; by AURKB (Ser-12). Arg-16 bears the Omega-N-methylarginine mark. At Thr-17 the chain carries Phosphothreonine; by AURKB and ROCK1. A phosphoserine; by CDK1 mark is found at Ser-28 and Ser-32. Residue Arg-37 is modified to Asymmetric dimethylarginine; alternate. Arg-37 carries the omega-N-methylarginine; alternate modification. Ser-45 bears the Phosphoserine mark. Arg-58 carries the post-translational modification ADP-ribosylarginine. Ser-60 carries the post-translational modification Phosphoserine; by AURKB. Arg-70 bears the Omega-N-methylarginine mark. Thr-76 is modified (phosphothreonine; by ROCK1). Ser-81 bears the Phosphoserine mark. Residues 107-415 enclose the IF rod domain; the sequence is EKVELQELND…KLLEGEESRI (309 aa). Positions 108 to 140 are coil 1A; sequence KVELQELNDRFANYIEKVRFLEQQNAALAAEVN. Positions 141 to 150 are linker 1; the sequence is RLKGREPTRV. The coil 1B stretch occupies residues 151 to 251; the sequence is AEIYEEELRE…HEEEIRELQA (101 aa). The segment at 252 to 267 is linker 12; that stretch reads QLQEQQVQVEMDMSKP. Positions 267–414 are interaction with NEB; that stretch reads PDLTAALRDI…RKLLEGEESR (148 aa). The interval 268–286 is coil 2A; sequence DLTAALRDIRAQYETIAAK. The interval 287–294 is linker 2; that stretch reads NISEAEEW. A phosphoserine mark is found at Ser-289, Ser-357, Ser-360, and Ser-423. The tract at residues 295–411 is coil 2B; the sequence is YKSKVSDLTQ…ATYRKLLEGE (117 aa). Residues 412–469 form a tail region; the sequence is ESRINLPIQTYSALNFRETSPEQRGSEVHTKKTVMIKTIETRDGEVVSEATQQQHEVL. An interaction with CRYAB region spans residues 437–452; that stretch reads SEVHTKKTVMIKTIET.

It belongs to the intermediate filament family. In terms of assembly, homomer. Interacts with DST. Interacts with MTM1. Interacts with EPPK1; interaction is dependent of higher-order structure of intermediate filament. Interacts with CRYAB. Interacts with NEB (via nebulin repeats 160-164). Interacts (via rod region) with NEBL (via nebulin repeats 1-5). Interacts with ASB2; the interaction targets DES for proteasomal degradation. Interacts with PKP1. Interacts with FLII. In terms of processing, ADP-ribosylation prevents ability to form intermediate filaments. Phosphorylation at Ser-7, Ser-28 and Ser-32 by CDK1, phosphorylation at Ser-60 by AURKB and phosphorylation at Thr-76 by ROCK1 contribute to efficient separation of desmin intermediate filaments during mitosis. Post-translationally, ubiquitination by a SCF-like complex containing ASB2 leads to proteasomal degradation.

It is found in the cytoplasm. The protein resides in the myofibril. Its subcellular location is the sarcomere. The protein localises to the z line. It localises to the cell membrane. It is found in the sarcolemma. The protein resides in the nucleus. Its subcellular location is the cell tip. The protein localises to the nucleus envelope. Its function is as follows. Muscle-specific type III intermediate filament essential for proper muscular structure and function. Plays a crucial role in maintaining the structure of sarcomeres, inter-connecting the Z-disks and forming the myofibrils, linking them not only to the sarcolemmal cytoskeleton, but also to the nucleus and mitochondria, thus providing strength for the muscle fiber during activity. In adult striated muscle they form a fibrous network connecting myofibrils to each other and to the plasma membrane from the periphery of the Z-line structures. May act as a sarcomeric microtubule-anchoring protein: specifically associates with detyrosinated tubulin-alpha chains, leading to buckled microtubules and mechanical resistance to contraction. Required for nuclear membrane integrity, via anchoring at the cell tip and nuclear envelope, resulting in maintenance of microtubule-derived intracellular mechanical forces. Contributes to the transcriptional regulation of the NKX2-5 gene in cardiac progenitor cells during a short period of cardiomyogenesis and in cardiac side population stem cells in the adult. Plays a role in maintaining an optimal conformation of nebulette (NEB) on heart muscle sarcomeres to bind and recruit cardiac alpha-actin. This is Desmin (DES) from Canis lupus familiaris (Dog).